A 78-amino-acid polypeptide reads, in one-letter code: MHEQLSPRDQELEARLVELETRLSFQEQALTELSEALADARLTGARNAELIRHLLEDLGKVRSTLFADAADEPPPPHY.

This sequence belongs to the SlyX family.

The sequence is that of Protein SlyX homolog from Xanthomonas campestris pv. campestris (strain 8004).